A 788-amino-acid chain; its full sequence is uncharacterized protein (788 aa).

One can recognise an Adrift-type SAM-dependent 2'-O-MTase domain in the interval 485-693 (EMITTAWIKL…IYIVLKSYKG (209 aa)). Positions 521 and 604 each coordinate S-adenosyl-L-methionine. Lys-645 serves as the catalytic Proton acceptor.

This is an uncharacterized protein from Acanthamoeba polyphaga (Amoeba).